The sequence spans 428 residues: GTPase Obg (428 aa).

The Obg domain maps to 1-158 (MFVDQVKIYV…RDVILELKVL (158 aa)). Residues 159–329 (ADVGLVGFPS…LLFEVANLLE (171 aa)) form the OBG-type G domain. GTP is bound by residues 165–172 (GFPSVGKS), 190–194 (FTTIV), 212–215 (DLPG), 282–285 (NKMD), and 310–312 (SAV). Mg(2+) is bound by residues S172 and T192. The OCT domain occupies 350–428 (KLETEGVKFD…ILEYEFEFID (79 aa)).

This sequence belongs to the TRAFAC class OBG-HflX-like GTPase superfamily. OBG GTPase family. As to quaternary structure, monomer. The cofactor is Mg(2+).

It is found in the cytoplasm. Functionally, an essential GTPase which binds GTP, GDP and possibly (p)ppGpp with moderate affinity, with high nucleotide exchange rates and a fairly low GTP hydrolysis rate. Plays a role in control of the cell cycle, stress response, ribosome biogenesis and in those bacteria that undergo differentiation, in morphogenesis control. This is GTPase Obg from Bacillus cereus (strain Q1).